A 147-amino-acid chain; its full sequence is MFDIGFWELVVIGVVALVVLGPERLPVAIRTASHWIRLIRSTANSVKAELEQELKLQDLHNDLKKAEQLQMNNLSPELQESIEQLKTAAQSVTRPYEQQNTIQPASAVAEVKEEPVAPISVATPDEEPTVIPAARAQPSAEQGEVKP.

A helical membrane pass occupies residues 1 to 21 (MFDIGFWELVVIGVVALVVLG). Residues 114-147 (EPVAPISVATPDEEPTVIPAARAQPSAEQGEVKP) form a disordered region.

The protein belongs to the TatB family. The Tat system comprises two distinct complexes: a TatABC complex, containing multiple copies of TatA, TatB and TatC subunits, and a separate TatA complex, containing only TatA subunits. Substrates initially bind to the TatABC complex, which probably triggers association of the separate TatA complex to form the active translocon.

It is found in the cell inner membrane. Functionally, part of the twin-arginine translocation (Tat) system that transports large folded proteins containing a characteristic twin-arginine motif in their signal peptide across membranes. Together with TatC, TatB is part of a receptor directly interacting with Tat signal peptides. TatB may form an oligomeric binding site that transiently accommodates folded Tat precursor proteins before their translocation. The chain is Sec-independent protein translocase protein TatB from Aeromonas hydrophila subsp. hydrophila (strain ATCC 7966 / DSM 30187 / BCRC 13018 / CCUG 14551 / JCM 1027 / KCTC 2358 / NCIMB 9240 / NCTC 8049).